A 492-amino-acid chain; its full sequence is Cytochrome P450 2B12 (492 aa).

Phosphoserine is present on serine 129. Position 437 (cysteine 437) interacts with heme.

Belongs to the cytochrome P450 family. Heme serves as cofactor. As to expression, preputial gland, but not in liver.

The protein localises to the endoplasmic reticulum membrane. It localises to the microsome membrane. The enzyme catalyses an organic molecule + reduced [NADPH--hemoprotein reductase] + O2 = an alcohol + oxidized [NADPH--hemoprotein reductase] + H2O + H(+). Functionally, cytochromes P450 are a group of heme-thiolate monooxygenases. In liver microsomes, this enzyme is involved in an NADPH-dependent electron transport pathway. This isozyme seems responsible for metabolism of 2,2',4,4',5,5'-hexachlorobiphenyl. In Rattus norvegicus (Rat), this protein is Cytochrome P450 2B12 (Cyp2b12).